We begin with the raw amino-acid sequence, 338 residues long: Dehydrogenase/reductase SDR family member 7 (338 aa).

Positions 1–28 are cleaved as a signal peptide; that stretch reads MSWELLLWLLALCALILPLVQLLRFLRA. Serine 60 and isoleucine 62 together coordinate NAD(+). Residue serine 190 coordinates substrate. Tyrosine 203, lysine 207, and serine 239 together coordinate NAD(+). The active-site Proton acceptor is tyrosine 203.

The protein belongs to the short-chain dehydrogenases/reductases (SDR) family.

The protein localises to the endoplasmic reticulum membrane. It catalyses the reaction all-trans-retinol + NADP(+) = all-trans-retinal + NADPH + H(+). The enzyme catalyses 5alpha-androstane-3alpha,17beta-diol + NADP(+) = 17beta-hydroxy-5alpha-androstan-3-one + NADPH + H(+). NADPH-dependent oxidoreductase which catalyzes the reduction of a variety of compounds bearing carbonyl groups including steroids, retinoids and xenobiotics. Catalyzes the reduction/inactivation of 5alpha-dihydrotestosterone to 3alpha-androstanediol, with a possible role in the modulation of androgen receptor function. Involved in the reduction of all-trans-retinal to all-trans-retinol. Converts cortisone to 20beta-dihydrocortisone in vitro, although the physiological relevance of this activity is questionable. Reduces exogenous compounds such as quinones (1,2-naphtoquinone, 9,10-phenantrenequinone and benzoquinone) and other xenobiotics (alpha-diketones) in vitro, suggesting a role in the biotransformation of xenobiotics with carbonyl group. A dehydrogenase activity has not been detected so far. May play a role as tumor suppressor. The polypeptide is Dehydrogenase/reductase SDR family member 7 (Mus musculus (Mouse)).